The sequence spans 464 residues: ATP synthase subunit beta (464 aa).

153 to 160 is a binding site for ATP; sequence GGAGVGKT.

The protein belongs to the ATPase alpha/beta chains family. F-type ATPases have 2 components, CF(1) - the catalytic core - and CF(0) - the membrane proton channel. CF(1) has five subunits: alpha(3), beta(3), gamma(1), delta(1), epsilon(1). CF(0) has three main subunits: a(1), b(2) and c(9-12). The alpha and beta chains form an alternating ring which encloses part of the gamma chain. CF(1) is attached to CF(0) by a central stalk formed by the gamma and epsilon chains, while a peripheral stalk is formed by the delta and b chains.

The protein localises to the cell inner membrane. The catalysed reaction is ATP + H2O + 4 H(+)(in) = ADP + phosphate + 5 H(+)(out). Its function is as follows. Produces ATP from ADP in the presence of a proton gradient across the membrane. The catalytic sites are hosted primarily by the beta subunits. The chain is ATP synthase subunit beta from Burkholderia lata (strain ATCC 17760 / DSM 23089 / LMG 22485 / NCIMB 9086 / R18194 / 383).